A 354-amino-acid chain; its full sequence is MKKIIMTGGGTAGHVTPNLALVPELKKLGYEIKYIGSIEGIERKIIEREGIEYFPISSGKLRRYFDLKNFSDPFKVLKGVFQAKKIIKREKPDIVFSKGGFVTVPVVIAAHLNKIPVIAHESDITPGLANKLATPYCTRVCVTFPESVKHIKGDKAVLTGTPIRRELLEGNKLEGIKLCGFKDNKPILLIIGGSLGSKVINEIVRKNLDNILSKFNIIHICGKSNLDENLENRKGYVQFEYVNEELPDLMKASDLVISRAGANVIYELLALKKPNLLIPLSKKSSRGDQILNAASFEKSGYSLVLKEEELEDKTLMKKLNYLYENRNVYINNMSKSKMDNGVKNITELIKKYTK.

UDP-N-acetyl-alpha-D-glucosamine contacts are provided by residues 11-13 (TAG), arginine 164, serine 194, and glutamine 289.

It belongs to the glycosyltransferase 28 family. MurG subfamily.

The protein resides in the cell membrane. The catalysed reaction is di-trans,octa-cis-undecaprenyl diphospho-N-acetyl-alpha-D-muramoyl-L-alanyl-D-glutamyl-meso-2,6-diaminopimeloyl-D-alanyl-D-alanine + UDP-N-acetyl-alpha-D-glucosamine = di-trans,octa-cis-undecaprenyl diphospho-[N-acetyl-alpha-D-glucosaminyl-(1-&gt;4)]-N-acetyl-alpha-D-muramoyl-L-alanyl-D-glutamyl-meso-2,6-diaminopimeloyl-D-alanyl-D-alanine + UDP + H(+). It participates in cell wall biogenesis; peptidoglycan biosynthesis. In terms of biological role, cell wall formation. Catalyzes the transfer of a GlcNAc subunit on undecaprenyl-pyrophosphoryl-MurNAc-pentapeptide (lipid intermediate I) to form undecaprenyl-pyrophosphoryl-MurNAc-(pentapeptide)GlcNAc (lipid intermediate II). This Clostridium botulinum (strain Loch Maree / Type A3) protein is UDP-N-acetylglucosamine--N-acetylmuramyl-(pentapeptide) pyrophosphoryl-undecaprenol N-acetylglucosamine transferase.